Consider the following 75-residue polypeptide: UPF0270 protein PFL_4336 (75 aa).

The protein belongs to the UPF0270 family.

This chain is UPF0270 protein PFL_4336, found in Pseudomonas fluorescens (strain ATCC BAA-477 / NRRL B-23932 / Pf-5).